Reading from the N-terminus, the 747-residue chain is AT-rich interactive domain-containing protein 4 (747 aa).

Residues 454-475 (PLPTRKRSEPCRESKEIENGGP) form a disordered region. Basic and acidic residues predominate over residues 459–471 (KRSEPCRESKEIE). Residues 566–670 (VCSEEEFLRD…YLLEYEYAHD (105 aa)) enclose the ARID domain. A PHD-type zinc finger spans residues 674–730 (GECCLICRSSTAGDWVNCGSCGEWAHFGCDRRPGLGAFKDYAKTDGLEYVCPNCSVS).

The protein localises to the nucleus. The polypeptide is AT-rich interactive domain-containing protein 4 (ARID4) (Arabidopsis thaliana (Mouse-ear cress)).